Reading from the N-terminus, the 411-residue chain is uncharacterized protein (411 aa).

The signal sequence occupies residues 1-21; sequence MHSRILLLLLMFAFNVGLINC. An EGF-like domain is found at 28-67; the sequence is PQSNCKIRCENGGMCVFDLERPDFHSCICLLGVYTGDRCQ. Cystine bridges form between Cys-32–Cys-42, Cys-36–Cys-54, and Cys-56–Cys-66. Residues 78–97 are compositionally biased toward polar residues; sequence TATSDETSHPMNIQHQQSQA. 2 disordered regions span residues 78–312 and 337–375; these read TATS…EPIR and HPIE…EYGM. Residues 100-230 are compositionally biased toward basic and acidic residues; that stretch reads DDARRRDDER…VEKELNDKRT (131 aa). Positions 237–266 are enriched in acidic residues; sequence FEYEGGDEEYPQVAEKEDEYDEGYETDNTE. The span at 267–276 shows a compositional bias: low complexity; it reads DVTITTTKTT.

This is an uncharacterized protein from Caenorhabditis elegans.